Here is a 282-residue protein sequence, read N- to C-terminus: Putative 4-diphosphocytidyl-2-C-methyl-D-erythritol kinase (282 aa).

The active site involves lysine 10. 94–104 provides a ligand contact to ATP; that stretch reads PICAGLGGGSS. Aspartate 136 is an active-site residue.

The protein belongs to the GHMP kinase family. IspE subfamily.

It catalyses the reaction 4-CDP-2-C-methyl-D-erythritol + ATP = 4-CDP-2-C-methyl-D-erythritol 2-phosphate + ADP + H(+). Catalyzes the phosphorylation of the position 2 hydroxy group of 4-diphosphocytidyl-2C-methyl-D-erythritol. The polypeptide is Putative 4-diphosphocytidyl-2-C-methyl-D-erythritol kinase (ipk) (Streptococcus mutans serotype c (strain ATCC 700610 / UA159)).